A 141-amino-acid polypeptide reads, in one-letter code: MADPHVLEEQFEETRSIIEELLEDGSDPDATYIIEHHFSAEDFDQLEKAAVEAFKLGYEVTDAEELETEDRVILMCCDVISESRLEVDLINAQVKQLADLAEKMGVNYDGWGTYFEDPNAPDDEDDNDDLFPPEEDEPRLH.

The disordered stretch occupies residues 112–141 (GTYFEDPNAPDDEDDNDDLFPPEEDEPRLH). Positions 119 to 141 (NAPDDEDDNDDLFPPEEDEPRLH) are enriched in acidic residues.

Belongs to the RraB family. As to quaternary structure, interacts with the C-terminal region of Rne.

The protein resides in the cytoplasm. Its function is as follows. Globally modulates RNA abundance by binding to RNase E (Rne) and regulating its endonucleolytic activity. Can modulate Rne action in a substrate-dependent manner by altering the composition of the degradosome. In Xenorhabdus nematophila (strain ATCC 19061 / DSM 3370 / CCUG 14189 / LMG 1036 / NCIMB 9965 / AN6), this protein is Regulator of ribonuclease activity B.